An 842-amino-acid polypeptide reads, in one-letter code: G-type lectin S-receptor-like serine/threonine-protein kinase At1g11330 (842 aa).

A signal peptide spans 1-29 (MVVSVTIRRRFVLLLLACTCLLSRRLCFG). Over 30–444 (EDRITFSSPI…AHSELKTHSN (415 aa)) the chain is Extracellular. Residues 32–157 (RITFSSPIKD…RNNGEILWES (126 aa)) form the Bulb-type lectin domain. Residues Asn63, Asn94, Asn122, Asn130, Asn196, and Asn260 are each glycosylated (N-linked (GlcNAc...) asparagine). The 37-residue stretch at 294–330 (PYTDCDAYGRCGRFGSCHAGENPPCKCVKGFVPKNNT) folds into the EGF-like; atypical domain. 2 disulfide bridges follow: Cys298/Cys310 and Cys304/Cys318. Asn328, Asn336, Asn354, and Asn396 each carry an N-linked (GlcNAc...) asparagine glycan. The region spanning 349-435 (CERQRNVSNG…SGIDLFIRVA (87 aa)) is the PAN domain. Intrachain disulfides connect Cys389–Cys410 and Cys393–Cys399. The helical transmembrane segment at 445–465 (LAVMIAAPVIGVMLIAAVCVL) threads the bilayer. Residues 466-842 (LACRKYKKRP…DVSLTAVTGR (377 aa)) are Cytoplasmic-facing. Residues 524–810 (FSLRNKLGQG…SLADPKQPAF (287 aa)) enclose the Protein kinase domain. Residues 530 to 538 (LGQGGFGPV) and Lys552 each bind ATP. Phosphoserine occurs at positions 558 and 573. A caM-binding region spans residues 613–630 (MKQKILDWKTRFNIMEGI). Asp649 (proton acceptor) is an active-site residue. Phosphoserine occurs at positions 653 and 666. Phosphothreonine is present on Thr683. Phosphoserine is present on residues Ser726, Ser727, Ser821, and Ser830. Residues 814–842 (RGASEAESSDQSSQKVSINDVSLTAVTGR) form a disordered region. Low complexity predominate over residues 818-827 (EAESSDQSSQ). Positions 828-842 (KVSINDVSLTAVTGR) are enriched in polar residues. At Thr837 the chain carries Phosphothreonine.

It belongs to the protein kinase superfamily. Ser/Thr protein kinase family.

It localises to the cell membrane. It catalyses the reaction L-seryl-[protein] + ATP = O-phospho-L-seryl-[protein] + ADP + H(+). It carries out the reaction L-threonyl-[protein] + ATP = O-phospho-L-threonyl-[protein] + ADP + H(+). The sequence is that of G-type lectin S-receptor-like serine/threonine-protein kinase At1g11330 from Arabidopsis thaliana (Mouse-ear cress).